The sequence spans 105 residues: Large ribosomal subunit protein uL24 (105 aa).

Belongs to the universal ribosomal protein uL24 family. As to quaternary structure, part of the 50S ribosomal subunit.

Functionally, one of two assembly initiator proteins, it binds directly to the 5'-end of the 23S rRNA, where it nucleates assembly of the 50S subunit. In terms of biological role, one of the proteins that surrounds the polypeptide exit tunnel on the outside of the subunit. The chain is Large ribosomal subunit protein uL24 from Clostridium novyi (strain NT).